Consider the following 227-residue polypeptide: E3 ubiquitin-protein ligase RNF186 (227 aa).

The RING-type zinc-finger motif lies at 40 to 86; it reads CLVCREPYSCPRLPKLLACQHAFCAICLKLLLCVQDNTWSITCPLCR. 2 helical membrane passes run 158-178 and 180-200; these read HLLLLALLIILIGPFIYPGVL and WVLTFIIALALLMSTLFCCLP.

As to quaternary structure, interacts with BNIP1. Polyubiquitinated. 'Lys-29'-linked autoubiquitination leads to proteasomal degradation.

It localises to the endoplasmic reticulum membrane. The catalysed reaction is S-ubiquitinyl-[E2 ubiquitin-conjugating enzyme]-L-cysteine + [acceptor protein]-L-lysine = [E2 ubiquitin-conjugating enzyme]-L-cysteine + N(6)-ubiquitinyl-[acceptor protein]-L-lysine.. Its pathway is protein modification; protein ubiquitination. E3 ubiquitin protein ligase that is part of an apoptotic signaling pathway activated by endoplasmic reticulum stress. Stimulates the expression of proteins specific of the unfolded protein response (UPR), ubiquitinates BNIP1 and regulates its localization to the mitochondrion and induces calcium release from the endoplasmic reticulum that ultimately leads to cell apoptosis. Plays a role in the maintenance of intestinal homeostasis and clearance of enteric pathogens. Upon NOD2 stimulation, ubiquitinates the ER stress sensor activating transcription factor 6/ATF6 and promotes the unfolded protein response UPR. Participates in basal level of autophagy maintenance by regulating the ubiquitination of EPHB2 and EPHB3. Upon stimulation by ligand EFNB1, ubiquitinates EPHB2 and further recruits MAP1LC3B for autophagy induction. Controls nutrient sensing by ubiquitinating Sestrin-2/SESN2, which is an intracellular sensor of cytosolic leucine and inhibitor of mTORC1 activity. In Homo sapiens (Human), this protein is E3 ubiquitin-protein ligase RNF186.